Consider the following 274-residue polypeptide: 4-hydroxy-3-methylbut-2-enyl diphosphate reductase (274 aa).

Position 12 (Cys12) interacts with [4Fe-4S] cluster. (2E)-4-hydroxy-3-methylbut-2-enyl diphosphate-binding residues include His36 and His70. The dimethylallyl diphosphate site is built by His36 and His70. Positions 36 and 70 each coordinate isopentenyl diphosphate. Cys92 lines the [4Fe-4S] cluster pocket. His120 is a (2E)-4-hydroxy-3-methylbut-2-enyl diphosphate binding site. His120 provides a ligand contact to dimethylallyl diphosphate. His120 contributes to the isopentenyl diphosphate binding site. The Proton donor role is filled by Glu122. Residue Thr158 coordinates (2E)-4-hydroxy-3-methylbut-2-enyl diphosphate. Cys186 contributes to the [4Fe-4S] cluster binding site. Positions 214, 215, 216, and 258 each coordinate (2E)-4-hydroxy-3-methylbut-2-enyl diphosphate. Dimethylallyl diphosphate contacts are provided by Ser214, Ser215, Asn216, and Ser258. Ser214, Ser215, Asn216, and Ser258 together coordinate isopentenyl diphosphate.

The protein belongs to the IspH family. [4Fe-4S] cluster is required as a cofactor.

It catalyses the reaction isopentenyl diphosphate + 2 oxidized [2Fe-2S]-[ferredoxin] + H2O = (2E)-4-hydroxy-3-methylbut-2-enyl diphosphate + 2 reduced [2Fe-2S]-[ferredoxin] + 2 H(+). The catalysed reaction is dimethylallyl diphosphate + 2 oxidized [2Fe-2S]-[ferredoxin] + H2O = (2E)-4-hydroxy-3-methylbut-2-enyl diphosphate + 2 reduced [2Fe-2S]-[ferredoxin] + 2 H(+). The protein operates within isoprenoid biosynthesis; dimethylallyl diphosphate biosynthesis; dimethylallyl diphosphate from (2E)-4-hydroxy-3-methylbutenyl diphosphate: step 1/1. Its pathway is isoprenoid biosynthesis; isopentenyl diphosphate biosynthesis via DXP pathway; isopentenyl diphosphate from 1-deoxy-D-xylulose 5-phosphate: step 6/6. Catalyzes the conversion of 1-hydroxy-2-methyl-2-(E)-butenyl 4-diphosphate (HMBPP) into a mixture of isopentenyl diphosphate (IPP) and dimethylallyl diphosphate (DMAPP). Acts in the terminal step of the DOXP/MEP pathway for isoprenoid precursor biosynthesis. The protein is 4-hydroxy-3-methylbut-2-enyl diphosphate reductase of Helicobacter pylori (strain Shi470).